Consider the following 102-residue polypeptide: NADH-quinone oxidoreductase subunit K (102 aa).

A run of 3 helical transmembrane segments spans residues 5-25 (LGHY…GIFL), 30-50 (IIVI…NLVA), and 62-82 (VFAL…LAVL).

It belongs to the complex I subunit 4L family. As to quaternary structure, NDH-1 is composed of 14 different subunits. Subunits NuoA, H, J, K, L, M, N constitute the membrane sector of the complex.

Its subcellular location is the cell inner membrane. The catalysed reaction is a quinone + NADH + 5 H(+)(in) = a quinol + NAD(+) + 4 H(+)(out). Functionally, NDH-1 shuttles electrons from NADH, via FMN and iron-sulfur (Fe-S) centers, to quinones in the respiratory chain. The immediate electron acceptor for the enzyme in this species is believed to be ubiquinone. Couples the redox reaction to proton translocation (for every two electrons transferred, four hydrogen ions are translocated across the cytoplasmic membrane), and thus conserves the redox energy in a proton gradient. The sequence is that of NADH-quinone oxidoreductase subunit K from Bradyrhizobium sp. (strain BTAi1 / ATCC BAA-1182).